The following is a 416-amino-acid chain: Keratin, type I cuticular Ha1 (416 aa).

Positions 1–56 are head; sequence MPYNFCLPSLSCRTSCSSRPCVPPSCHSCTLPGACNIPANVSNCNWFCEGSFNGSE. Positions 56–367 constitute an IF rod domain; sequence EKETMQFLND…SLLESEDCNL (312 aa). The segment at 57–91 is coil 1A; sequence KETMQFLNDRLASYLEKVRQLERDNAELENLIRER. A linker 1 region spans residues 92–102; sequence SQQQEPLLCPS. The segment at 103–203 is coil 1B; sequence YQSYFKTIEE…HEQEVNTLRC (101 aa). Residues 204–219 are linker 12; the sequence is QLGDRLNVEVDAAPTV. A coil 2 region spans residues 220–363; sequence DLNRVLNETR…NTYRSLLESE (144 aa). A tail region spans residues 364–416; the sequence is DCNLPSNPCATTNACSKPIGPCLSNPCTSCVPPAPCTPCAPRPRCGPCNSFVR.

The protein belongs to the intermediate filament family. Present in scalp but not in hairless skin. Abundantly expressed in the differentiating cortex of growing (anagen) hair. Expression is restricted to the keratinocytes of the hair cortex and is absent from inner root sheath and medulla.

The protein is Keratin, type I cuticular Ha1 (KRT31) of Homo sapiens (Human).